Consider the following 208-residue polypeptide: Holliday junction branch migration complex subunit RuvA (208 aa).

Positions 1–63 (MIAFVSGPVA…EDSLTLYGFA (63 aa)) are domain I. The interval 64-142 (NDDERQVFEL…EPVGAHIGQQ (79 aa)) is domain II. Positions 143 to 147 (GIGTP) are flexible linker. The interval 148–208 (VTSGWRDQLQ…AALQTLNRAR (61 aa)) is domain III.

This sequence belongs to the RuvA family. Homotetramer. Forms an RuvA(8)-RuvB(12)-Holliday junction (HJ) complex. HJ DNA is sandwiched between 2 RuvA tetramers; dsDNA enters through RuvA and exits via RuvB. An RuvB hexamer assembles on each DNA strand where it exits the tetramer. Each RuvB hexamer is contacted by two RuvA subunits (via domain III) on 2 adjacent RuvB subunits; this complex drives branch migration. In the full resolvosome a probable DNA-RuvA(4)-RuvB(12)-RuvC(2) complex forms which resolves the HJ.

The protein localises to the cytoplasm. Its function is as follows. The RuvA-RuvB-RuvC complex processes Holliday junction (HJ) DNA during genetic recombination and DNA repair, while the RuvA-RuvB complex plays an important role in the rescue of blocked DNA replication forks via replication fork reversal (RFR). RuvA specifically binds to HJ cruciform DNA, conferring on it an open structure. The RuvB hexamer acts as an ATP-dependent pump, pulling dsDNA into and through the RuvAB complex. HJ branch migration allows RuvC to scan DNA until it finds its consensus sequence, where it cleaves and resolves the cruciform DNA. The polypeptide is Holliday junction branch migration complex subunit RuvA (Streptomyces griseus subsp. griseus (strain JCM 4626 / CBS 651.72 / NBRC 13350 / KCC S-0626 / ISP 5235)).